A 280-amino-acid polypeptide reads, in one-letter code: Energy-coupling factor transporter ATP-binding protein EcfA (280 aa).

The ABC transporter domain maps to 5–240 (IDVKNLTYKY…DEMLKLTGLE (236 aa)). 40–47 (GHNGSGKS) is an ATP binding site.

Belongs to the ABC transporter superfamily. Energy-coupling factor EcfA family. Forms a stable energy-coupling factor (ECF) transporter complex composed of 2 membrane-embedded substrate-binding proteins (S component), 2 ATP-binding proteins (A component) and 2 transmembrane proteins (T component).

Its subcellular location is the cell membrane. Its function is as follows. ATP-binding (A) component of a common energy-coupling factor (ECF) ABC-transporter complex. Unlike classic ABC transporters this ECF transporter provides the energy necessary to transport a number of different substrates. This is Energy-coupling factor transporter ATP-binding protein EcfA from Pediococcus pentosaceus (strain ATCC 25745 / CCUG 21536 / LMG 10740 / 183-1w).